Consider the following 611-residue polypeptide: Mitochondrial distribution and morphology protein 34 (611 aa).

The region spanning 1 to 195 (MAFNFNWSPL…LPAIIHRLSL (195 aa)) is the SMP-LTD domain. A compositionally biased stretch (polar residues) spans 325–342 (SAPLSSQDTASVASSQSR). 4 disordered regions span residues 325–347 (SAPLSSQDTASVASSQSRPGLPS), 361–402 (RHSK…STIT), 415–544 (SIIP…PTYT), and 587–611 (SYVGSGSGSGGFWDRSHTPPPAYRH). Residues 361 to 373 (RHSKAHARKRKKR) are compositionally biased toward basic residues. Basic and acidic residues-rich tracts occupy residues 374 to 385 (VIDLRPHRKPTD) and 444 to 459 (TLRDRIVDRDDAERTN). Pro residues predominate over residues 520 to 529 (PLGPPAPAPI).

It belongs to the MDM34 family. Component of the ER-mitochondria encounter structure (ERMES) or MDM complex, composed of MMM1, MDM10, MDM12 and MDM34.

The protein localises to the mitochondrion outer membrane. Component of the ERMES/MDM complex, which serves as a molecular tether to connect the endoplasmic reticulum (ER) and mitochondria. Components of this complex are involved in the control of mitochondrial shape and protein biogenesis, and function in nonvesicular lipid trafficking between the ER and mitochondria. MDM34 is required for the interaction of the ER-resident membrane protein MMM1 and the outer mitochondrial membrane-resident beta-barrel protein MDM10. In Paracoccidioides brasiliensis (strain Pb18), this protein is Mitochondrial distribution and morphology protein 34.